Reading from the N-terminus, the 444-residue chain is C4-dicarboxylate transport protein 1 (444 aa).

Helical transmembrane passes span 9–29, 42–62, 78–98, 152–172, 190–210, 221–241, 307–327, 354–374, and 380–400; these read SIFL…VGIP, FIKL…VNGI, SVIY…VVAY, ILQV…VGEQ, IMGM…AFTT, LGAL…AVLG, FSIY…TPLA, VILA…LVLV, and FMGI…TVTI.

This sequence belongs to the dicarboxylate/amino acid:cation symporter (DAACS) (TC 2.A.23) family.

It localises to the cell inner membrane. Its function is as follows. Responsible for the transport of dicarboxylates such as succinate, fumarate, and malate from the periplasm across the membrane. The sequence is that of C4-dicarboxylate transport protein 1 from Pseudomonas paraeruginosa (strain DSM 24068 / PA7) (Pseudomonas aeruginosa (strain PA7)).